The primary structure comprises 878 residues: Bifunctional heparan sulfate N-deacetylase/N-sulfotransferase 1 (878 aa).

The Cytoplasmic portion of the chain corresponds to 1–17; sequence MSLSLKTRRFGRPVRPQ. Residues 1–169 are sufficient for localization to Golgi membrane; it reads MSLSLKTRRF…VEYGVGIIGF (169 aa). The helical; Signal-anchor for type II membrane protein transmembrane segment at 18 to 38 threads the bilayer; the sequence is LVLLLLFALCLLSVFISAYYL. The Lumenal portion of the chain corresponds to 39–878; that stretch reads YGWKRGLEPS…WLREELQSTR (840 aa). The tract at residues 40 to 594 is heparan sulfate N-deacetylase 1; sequence GWKRGLEPSG…KRHKDIWSKE (555 aa). Positions 47–71 are disordered; sequence PSGSEAQSPDCDEPKISPSRLLPMK. Residues Asn231, Asn347, and Asn397 are each glycosylated (N-linked (GlcNAc...) asparagine). The interval 595–878 is heparan sulfate N-sulfotransferase 1; the sequence is KTCDRFPKLL…WLREELQSTR (284 aa). The active-site For sulfotransferase activity is Lys610. 610–614 lines the adenosine 3',5'-bisphosphate pocket; it reads KTGTT. Residue Asn663 is glycosylated (N-linked (GlcNAc...) asparagine). Residues Ser708 and Trp813 each coordinate adenosine 3',5'-bisphosphate. Cys814 and Cys824 form a disulfide bridge. 829–833 contributes to the adenosine 3',5'-bisphosphate binding site; it reads KGRKY.

This sequence belongs to the sulfotransferase 1 family. NDST subfamily. As to quaternary structure, monomer.

It localises to the golgi apparatus membrane. The protein resides in the golgi apparatus. Its subcellular location is the trans-Golgi network membrane. The enzyme catalyses alpha-D-glucosaminyl-[heparan sulfate](n) + 3'-phosphoadenylyl sulfate = N-sulfo-alpha-D-glucosaminyl-[heparan sulfate](n) + adenosine 3',5'-bisphosphate + 2 H(+). Its pathway is glycan metabolism; heparan sulfate biosynthesis. It participates in glycan metabolism; heparin biosynthesis. Its function is as follows. Essential bifunctional enzyme that catalyzes both the N-deacetylation and the N-sulfation of glucosamine (GlcNAc) of the glycosaminoglycan in heparan sulfate. Modifies the GlcNAc-GlcA disaccharide repeating sugar backbone to make N-sulfated heparosan, a prerequisite substrate for later modifications in heparin biosynthesis. Plays a role in determining the extent and pattern of sulfation of heparan sulfate. The protein is Bifunctional heparan sulfate N-deacetylase/N-sulfotransferase 1 (ndst1) of Xenopus tropicalis (Western clawed frog).